The sequence spans 260 residues: Ribosomal RNA small subunit methyltransferase G (260 aa).

S-adenosyl-L-methionine-binding positions include Gly94, Phe99, 117–119 (DSS), 145–146 (AE), and Arg164.

It belongs to the methyltransferase superfamily. RNA methyltransferase RsmG family.

It localises to the cytoplasm. Specifically methylates the N7 position of a guanine in 16S rRNA. This is Ribosomal RNA small subunit methyltransferase G from Synechococcus sp. (strain JA-3-3Ab) (Cyanobacteria bacterium Yellowstone A-Prime).